We begin with the raw amino-acid sequence, 399 residues long: Fructose-1,6-bisphosphate aldolase/phosphatase (399 aa).

The active-site Proton acceptor; for FBP phosphatase activity is the aspartate 11. 4 residues coordinate Mg(2+): aspartate 11, histidine 18, aspartate 52, and aspartate 53. Histidine 18 contributes to the beta-D-fructose 1,6-bisphosphate binding site. Position 18 (histidine 18) interacts with dihydroxyacetone phosphate. Tyrosine 91 is a binding site for beta-D-fructose 1,6-bisphosphate. Glutamine 95 is a Mg(2+) binding site. 104–105 (GN) contacts beta-D-fructose 1,6-bisphosphate. Aspartate 132 provides a ligand contact to Mg(2+). Lysine 133 lines the beta-D-fructose 1,6-bisphosphate pocket. Lysine 133 lines the dihydroxyacetone phosphate pocket. The Proton donor/acceptor; for FBP aldolase activity role is filled by tyrosine 229. Lysine 232, aspartate 233, and aspartate 234 together coordinate Mg(2+). The active-site Schiff-base intermediate with DHAP; for FBP aldolase activity is lysine 232. Beta-D-fructose 1,6-bisphosphate contacts are provided by residues 242-243 (QS), arginine 266, aspartate 297, and tyrosine 358. Dihydroxyacetone phosphate contacts are provided by arginine 266 and aspartate 297.

The protein belongs to the FBP aldolase/phosphatase family. In terms of assembly, homooctamer; dimer of tetramers. Mg(2+) serves as cofactor.

The catalysed reaction is beta-D-fructose 1,6-bisphosphate + H2O = beta-D-fructose 6-phosphate + phosphate. It catalyses the reaction beta-D-fructose 1,6-bisphosphate = D-glyceraldehyde 3-phosphate + dihydroxyacetone phosphate. The protein operates within carbohydrate biosynthesis; gluconeogenesis. Catalyzes two subsequent steps in gluconeogenesis: the aldol condensation of dihydroxyacetone phosphate (DHAP) and glyceraldehyde-3-phosphate (GA3P) to fructose-1,6-bisphosphate (FBP), and the dephosphorylation of FBP to fructose-6-phosphate (F6P). In Pyrobaculum neutrophilum (strain DSM 2338 / JCM 9278 / NBRC 100436 / V24Sta) (Thermoproteus neutrophilus), this protein is Fructose-1,6-bisphosphate aldolase/phosphatase.